The chain runs to 646 residues: 1-deoxy-D-xylulose-5-phosphate synthase (646 aa).

Thiamine diphosphate is bound by residues His-86 and 127–129 (AHS). Residue Asp-158 coordinates Mg(2+). Residues 159 to 160 (GA), Asn-188, Tyr-295, and Glu-377 each bind thiamine diphosphate. Asn-188 is a Mg(2+) binding site.

It belongs to the transketolase family. DXPS subfamily. Homodimer. Mg(2+) is required as a cofactor. It depends on thiamine diphosphate as a cofactor.

It catalyses the reaction D-glyceraldehyde 3-phosphate + pyruvate + H(+) = 1-deoxy-D-xylulose 5-phosphate + CO2. Its pathway is metabolic intermediate biosynthesis; 1-deoxy-D-xylulose 5-phosphate biosynthesis; 1-deoxy-D-xylulose 5-phosphate from D-glyceraldehyde 3-phosphate and pyruvate: step 1/1. Functionally, catalyzes the acyloin condensation reaction between C atoms 2 and 3 of pyruvate and glyceraldehyde 3-phosphate to yield 1-deoxy-D-xylulose-5-phosphate (DXP). This Burkholderia ambifaria (strain ATCC BAA-244 / DSM 16087 / CCUG 44356 / LMG 19182 / AMMD) (Burkholderia cepacia (strain AMMD)) protein is 1-deoxy-D-xylulose-5-phosphate synthase.